Here is a 542-residue protein sequence, read N- to C-terminus: uncharacterized protein (542 aa).

The Extracellular portion of the chain corresponds to 1–78; the sequence is MSVQKEEYDI…EEKKLVRKMD (78 aa). A helical membrane pass occupies residues 79–99; sequence LKIFLWVFIMFAFLDLIRKNI. Residues 100-119 lie on the Cytoplasmic side of the membrane; that stretch reads ARAVSDNFIVDLKMNTNDYN. Residues 120–140 form a helical membrane-spanning segment; it reads LGQTVYLVIFLASELPGNLLS. Residues 141–147 are Extracellular-facing; sequence KRFGPER. The helical transmembrane segment at 148-168 threads the bilayer; sequence VIPVQIVLWSVICITQAGLKN. Over 169 to 176 the chain is Cytoplasmic; sequence RGQFIATR. A helical transmembrane segment spans residues 177–197; it reads CLLGMVQGGFIPDNILYLSYY. Topologically, residues 198–208 are extracellular; the sequence is YTGAELTFRLS. A helical membrane pass occupies residues 209–229; sequence FFWCAIPLFQILGSLLASGII. At 230 to 241 the chain is on the cytoplasmic side; sequence EMRGIHNLAGWQ. A helical membrane pass occupies residues 242–262; that stretch reads YLFIIEGFLSLSVGVASFYLM. Over 263–326 the chain is Extracellular; that stretch reads RRGPTQTGES…TLTEFDLWPL (64 aa). Residues 327–347 form a helical membrane-spanning segment; sequence FIQGITAFISLQTVGSYLSLI. Residues 348-359 are Cytoplasmic-facing; sequence LKSLNYSTFLSN. Residues 360 to 380 form a helical membrane-spanning segment; sequence ILAIPGQALLLINLPLAALLS. The Extracellular segment spans residues 381–387; sequence RKLKEKS. The chain crosses the membrane as a helical span at residues 388–408; that stretch reads LCVGIANVWVLPFIVSLVALP. Topologically, residues 409–416 are cytoplasmic; it reads TDTNPWIK. Residues 417-437 form a helical membrane-spanning segment; it reads YILLTGILGLPYTHSILAGWV. Topologically, residues 438–482 are extracellular; the sequence is SEISNSVRSRTVGTALYNMSAQVGAIIASNMYRNDDKPYYTRGNK. Residues 483 to 503 traverse the membrane as a helical segment; that stretch reads ILLGFTCFNICMAVATKFYYI. Over 504 to 542 the chain is Cytoplasmic; sequence SRNKYKDRKWNSMTKEEQINYLDTTKDKGMKRLDYRFIH.

The protein belongs to the major facilitator superfamily. Allantoate permease family.

It is found in the membrane. This is an uncharacterized protein from Saccharomyces cerevisiae (strain ATCC 204508 / S288c) (Baker's yeast).